Here is a 387-residue protein sequence, read N- to C-terminus: Succinate--CoA ligase [ADP-forming] subunit beta (387 aa).

In terms of domain architecture, ATP-grasp spans 9–245; it reads KDLLESYGLK…KSQENAKELK (237 aa). Residues lysine 46, 53–55, glutamate 100, tyrosine 103, and glutamate 108 contribute to the ATP site; that span reads GRG. Positions 200 and 214 each coordinate Mg(2+). Substrate contacts are provided by residues asparagine 265 and 322-324; that span reads GIV.

It belongs to the succinate/malate CoA ligase beta subunit family. In terms of assembly, heterotetramer of two alpha and two beta subunits. Mg(2+) is required as a cofactor.

It carries out the reaction succinate + ATP + CoA = succinyl-CoA + ADP + phosphate. The catalysed reaction is GTP + succinate + CoA = succinyl-CoA + GDP + phosphate. The protein operates within carbohydrate metabolism; tricarboxylic acid cycle; succinate from succinyl-CoA (ligase route): step 1/1. Its function is as follows. Succinyl-CoA synthetase functions in the citric acid cycle (TCA), coupling the hydrolysis of succinyl-CoA to the synthesis of either ATP or GTP and thus represents the only step of substrate-level phosphorylation in the TCA. The beta subunit provides nucleotide specificity of the enzyme and binds the substrate succinate, while the binding sites for coenzyme A and phosphate are found in the alpha subunit. This Francisella tularensis subsp. tularensis (strain WY96-3418) protein is Succinate--CoA ligase [ADP-forming] subunit beta.